A 335-amino-acid polypeptide reads, in one-letter code: Tetraacyldisaccharide 4'-kinase (335 aa).

An ATP-binding site is contributed by 58–65; sequence TAGGSGKT.

This sequence belongs to the LpxK family.

The enzyme catalyses a lipid A disaccharide + ATP = a lipid IVA + ADP + H(+). Its pathway is glycolipid biosynthesis; lipid IV(A) biosynthesis; lipid IV(A) from (3R)-3-hydroxytetradecanoyl-[acyl-carrier-protein] and UDP-N-acetyl-alpha-D-glucosamine: step 6/6. Its function is as follows. Transfers the gamma-phosphate of ATP to the 4'-position of a tetraacyldisaccharide 1-phosphate intermediate (termed DS-1-P) to form tetraacyldisaccharide 1,4'-bis-phosphate (lipid IVA). This chain is Tetraacyldisaccharide 4'-kinase, found in Shewanella frigidimarina (strain NCIMB 400).